The primary structure comprises 407 residues: Phosphoglycerate kinase (407 aa).

Substrate is bound by residues 24 to 26 (DFN), Arg40, 63 to 66 (HLGR), Arg121, and Arg154. Residues Lys205, Glu337, and 363 to 366 (GGDS) each bind ATP.

The protein belongs to the phosphoglycerate kinase family. Monomer.

It localises to the cytoplasm. The catalysed reaction is (2R)-3-phosphoglycerate + ATP = (2R)-3-phospho-glyceroyl phosphate + ADP. Its pathway is carbohydrate degradation; glycolysis; pyruvate from D-glyceraldehyde 3-phosphate: step 2/5. This chain is Phosphoglycerate kinase, found in Gloeobacter violaceus (strain ATCC 29082 / PCC 7421).